The chain runs to 438 residues: Probable trafficking protein particle complex subunit 13 homolog (438 aa).

Belongs to the TRAPPC13 family.

The sequence is that of Probable trafficking protein particle complex subunit 13 homolog from Drosophila melanogaster (Fruit fly).